The chain runs to 508 residues: Pyruvate kinase 2 (508 aa).

Substrate is bound at residue Arg50. 4 residues coordinate K(+): Asn52, Ser54, Asp85, and Thr86. 52–55 (NFSH) is a binding site for ATP. Arg92 and Lys178 together coordinate ATP. Mg(2+) is bound at residue Glu243. Gly266, Asp267, and Thr299 together coordinate substrate. Asp267 lines the Mg(2+) pocket.

This sequence belongs to the pyruvate kinase family. As to quaternary structure, homotetramer. The cofactor is Mg(2+). Requires K(+) as cofactor.

The catalysed reaction is pyruvate + ATP = phosphoenolpyruvate + ADP + H(+). Its pathway is carbohydrate degradation; glycolysis; pyruvate from D-glyceraldehyde 3-phosphate: step 5/5. This is Pyruvate kinase 2 (PYK2) from Candida glabrata (strain ATCC 2001 / BCRC 20586 / JCM 3761 / NBRC 0622 / NRRL Y-65 / CBS 138) (Yeast).